The following is a 197-amino-acid chain: Protein GrpE (197 aa).

The disordered stretch occupies residues 1–39; it reads MSSKEQKTPEGQAPEEIIMDQHEEIEAVEPEASAEQVDP.

It belongs to the GrpE family. As to quaternary structure, homodimer.

The protein resides in the cytoplasm. Its function is as follows. Participates actively in the response to hyperosmotic and heat shock by preventing the aggregation of stress-denatured proteins, in association with DnaK and GrpE. It is the nucleotide exchange factor for DnaK and may function as a thermosensor. Unfolded proteins bind initially to DnaJ; upon interaction with the DnaJ-bound protein, DnaK hydrolyzes its bound ATP, resulting in the formation of a stable complex. GrpE releases ADP from DnaK; ATP binding to DnaK triggers the release of the substrate protein, thus completing the reaction cycle. Several rounds of ATP-dependent interactions between DnaJ, DnaK and GrpE are required for fully efficient folding. The sequence is that of Protein GrpE from Escherichia coli O157:H7 (strain EC4115 / EHEC).